Reading from the N-terminus, the 4644-residue chain is Cytoplasmic dynein 1 heavy chain 1 (4644 aa).

Ser-2 carries the N-acetylserine modification. The segment at 2–1865 (SEPGGGEDGS…SIQMANAKFN (1864 aa)) is stem. 4 coiled-coil regions span residues 48–69 (AALE…FLSD), 179–200 (SVEK…NIEI), 453–476 (AHRK…QLRA), and 541–564 (TEAW…RITA). Ser-68 is subject to Phosphoserine. The interaction with DYNC1I2 stretch occupies residues 446–701 (MVWRINPAHR…NTQEIFDDWA (256 aa)). The interaction with DYNC1LI2 stretch occupies residues 649–800 (AKQIDRQLTA…EKVEERNTIS (152 aa)). N6-acetyllysine is present on Lys-1123. Residues 1169 to 1201 (TYVQSLKRKIKQFEKQVELYRNGQRLLEKQRFQ) are a coiled coil. At Ser-1228 the chain carries Phosphoserine. Coiled coils occupy residues 1229-1250 (AIQQ…AVES) and 1355-1371 (RKLR…LKNF). 4 AAA regions span residues 1866–2097 (YGFE…VLVS), 2178–2450 (EELK…LTRL), 2554–2803 (EVET…WVRG), and 2897–3166 (VFYE…GGRT). Residues 1904-1911 (GPAGTGKT) and 2222-2229 (GPSGSGKS) contribute to the ATP site. A disordered region spans residues 2388 to 2408 (GEDEAQRRRKGKEDEGEEAAS). ATP is bound by residues 2593–2600 (GPPGSGKT) and 2935–2942 (GVSGAGKT). 3 coiled-coil regions span residues 3187–3273 (EKRS…ADKQ), 3394–3498 (AIAQ…KNQM), and 3735–3798 (EFQL…VSQQ). Residues 3187-3498 (EKRSELEEQQ…KTSETFKNQM (312 aa)) are stalk. The residue at position 3478 (Lys-3478) is an N6-acetyllysine. AAA stretches follow at residues 3551–3780 (LSNA…EVTR) and 4003–4219 (AHMF…TVDT). Ser-4160 carries the phosphoserine modification. The residue at position 4281 (Lys-4281) is an N6-acetyllysine. A Phosphothreonine modification is found at Thr-4364. Phosphoserine is present on Ser-4366.

This sequence belongs to the dynein heavy chain family. In terms of assembly, homodimer. The cytoplasmic dynein 1 complex consists of two catalytic heavy chains (HCs) and a number of non-catalytic subunits presented by intermediate chains (ICs), light intermediate chains (LICs) and light chains (LCs); the composition seems to vary in respect to the IC, LIC and LC composition. The heavy chain homodimer serves as a scaffold for the probable homodimeric assembly of the respective non-catalytic subunits. The ICs and LICs bind directly to the HC dimer and dynein LCs assemble on the IC dimer. Interacts with DYNC1LI1; DYNC1LI1 and DYNC1LI2 bind mutually exclusive to DYNC1H1. Interacts with DYNC1LI2; DYNC1LI1 and DYNC1LI2 bind mutually exclusive to DYNC1H1. Interacts with DYNC1I2. Interacts with BICD2. Interacts with DNALI1.

Its subcellular location is the cytoplasm. It localises to the cytoskeleton. Cytoplasmic dynein 1 acts as a motor for the intracellular retrograde motility of vesicles and organelles along microtubules. Dynein has ATPase activity; the force-producing power stroke is thought to occur on release of ADP. Plays a role in mitotic spindle assembly and metaphase plate congression. The protein is Cytoplasmic dynein 1 heavy chain 1 (Dync1h1) of Mus musculus (Mouse).